The sequence spans 761 residues: Phosphoribosylformylglycinamidine synthase subunit PurL (761 aa).

Residue His-48 is part of the active site. ATP contacts are provided by Tyr-51 and Lys-90. Position 92 (Glu-92) interacts with Mg(2+). Residues 93-96 (SHNH) and Arg-115 each bind substrate. The active-site Proton acceptor is the His-94. Position 116 (Asp-116) interacts with Mg(2+). Gln-239 contributes to the substrate binding site. Asp-267 contributes to the Mg(2+) binding site. Substrate is bound at residue 311–313 (ESQ). Residues Asp-499 and Gly-536 each coordinate ATP. Asn-537 contributes to the Mg(2+) binding site. A substrate-binding site is contributed by Ser-539.

The protein belongs to the FGAMS family. Monomer. Part of the FGAM synthase complex composed of 1 PurL, 1 PurQ and 2 PurS subunits.

It is found in the cytoplasm. The enzyme catalyses N(2)-formyl-N(1)-(5-phospho-beta-D-ribosyl)glycinamide + L-glutamine + ATP + H2O = 2-formamido-N(1)-(5-O-phospho-beta-D-ribosyl)acetamidine + L-glutamate + ADP + phosphate + H(+). It participates in purine metabolism; IMP biosynthesis via de novo pathway; 5-amino-1-(5-phospho-D-ribosyl)imidazole from N(2)-formyl-N(1)-(5-phospho-D-ribosyl)glycinamide: step 1/2. Its function is as follows. Part of the phosphoribosylformylglycinamidine synthase complex involved in the purines biosynthetic pathway. Catalyzes the ATP-dependent conversion of formylglycinamide ribonucleotide (FGAR) and glutamine to yield formylglycinamidine ribonucleotide (FGAM) and glutamate. The FGAM synthase complex is composed of three subunits. PurQ produces an ammonia molecule by converting glutamine to glutamate. PurL transfers the ammonia molecule to FGAR to form FGAM in an ATP-dependent manner. PurS interacts with PurQ and PurL and is thought to assist in the transfer of the ammonia molecule from PurQ to PurL. This chain is Phosphoribosylformylglycinamidine synthase subunit PurL, found in Thermosynechococcus vestitus (strain NIES-2133 / IAM M-273 / BP-1).